A 218-amino-acid polypeptide reads, in one-letter code: uncharacterized protein (218 aa).

Helical transmembrane passes span 19-39 (VFGFSEFSIIGFITAVIFTII), 92-112 (FDYALFLTLVGIANIGIVSAV), 124-144 (YGLIAMIATLPLFGSAGMILA), 161-181 (LLFEKIIFAAGMAGETGIAPF), and 196-216 (YILMIHLSSLLLIVRTVEILL).

The protein resides in the cell membrane. This is an uncharacterized protein from Methanocaldococcus jannaschii (strain ATCC 43067 / DSM 2661 / JAL-1 / JCM 10045 / NBRC 100440) (Methanococcus jannaschii).